Reading from the N-terminus, the 127-residue chain is S-adenosylmethionine decarboxylase proenzyme 2 (127 aa).

Serine 63 (schiff-base intermediate with substrate; via pyruvic acid) is an active-site residue. Serine 63 bears the Pyruvic acid (Ser); by autocatalysis mark. Catalysis depends on histidine 68, which acts as the Proton acceptor; for processing activity. Residue cysteine 83 is the Proton donor; for catalytic activity of the active site.

Belongs to the prokaryotic AdoMetDC family. Type 1 subfamily. Heterotetramer of two alpha and two beta chains arranged as a dimer of alpha/beta heterodimers. Requires pyruvate as cofactor. Post-translationally, is synthesized initially as an inactive proenzyme. Formation of the active enzyme involves a self-maturation process in which the active site pyruvoyl group is generated from an internal serine residue via an autocatalytic post-translational modification. Two non-identical subunits are generated from the proenzyme in this reaction, and the pyruvate is formed at the N-terminus of the alpha chain, which is derived from the carboxyl end of the proenzyme. The post-translation cleavage follows an unusual pathway, termed non-hydrolytic serinolysis, in which the side chain hydroxyl group of the serine supplies its oxygen atom to form the C-terminus of the beta chain, while the remainder of the serine residue undergoes an oxidative deamination to produce ammonia and the pyruvoyl group blocking the N-terminus of the alpha chain.

It catalyses the reaction S-adenosyl-L-methionine + H(+) = S-adenosyl 3-(methylsulfanyl)propylamine + CO2. It functions in the pathway amine and polyamine biosynthesis; S-adenosylmethioninamine biosynthesis; S-adenosylmethioninamine from S-adenosyl-L-methionine: step 1/1. Its function is as follows. Catalyzes the decarboxylation of S-adenosylmethionine to S-adenosylmethioninamine (dcAdoMet), the propylamine donor required for the synthesis of the polyamines spermine and spermidine from the diamine putrescine. This is S-adenosylmethionine decarboxylase proenzyme 2 from Halalkalibacterium halodurans (strain ATCC BAA-125 / DSM 18197 / FERM 7344 / JCM 9153 / C-125) (Bacillus halodurans).